Consider the following 314-residue polypeptide: tRNA pseudouridine synthase B (314 aa).

Residue His-43 participates in substrate binding. Asp-48 acts as the Nucleophile in catalysis. Positions 76, 179, and 200 each coordinate substrate.

It belongs to the pseudouridine synthase TruB family. Type 1 subfamily.

It carries out the reaction uridine(55) in tRNA = pseudouridine(55) in tRNA. Functionally, responsible for synthesis of pseudouridine from uracil-55 in the psi GC loop of transfer RNAs. This is tRNA pseudouridine synthase B from Shigella boydii serotype 4 (strain Sb227).